Reading from the N-terminus, the 367-residue chain is Ferredoxin--NADP reductase 2 (367 aa).

FAD is bound by residues D56, Q64, Y69, V109, F144, D309, and T350.

The protein belongs to the ferredoxin--NADP reductase type 2 family. Homodimer. The cofactor is FAD.

The catalysed reaction is 2 reduced [2Fe-2S]-[ferredoxin] + NADP(+) + H(+) = 2 oxidized [2Fe-2S]-[ferredoxin] + NADPH. The polypeptide is Ferredoxin--NADP reductase 2 (Cupriavidus metallidurans (strain ATCC 43123 / DSM 2839 / NBRC 102507 / CH34) (Ralstonia metallidurans)).